The sequence spans 504 residues: Anaerobic nitric oxide reductase transcription regulator NorR (504 aa).

D57 bears the 4-aspartylphosphate mark. The Sigma-54 factor interaction domain occupies 187–416; the sequence is MIGLSPGMTQ…LEHAIHRAVV (230 aa). Residues 215-222 and 278-287 each bind ATP; these read GETGTGKE and ADNGTLFLDE. A DNA-binding region (H-T-H motif) is located at residues 479–498; sequence WAACARMLETDVANLHRLAK.

The protein operates within nitrogen metabolism; nitric oxide reduction. Its function is as follows. Required for the expression of anaerobic nitric oxide (NO) reductase, acts as a transcriptional activator for at least the norVW operon. Activation also requires sigma-54. In Shigella flexneri serotype 5b (strain 8401), this protein is Anaerobic nitric oxide reductase transcription regulator NorR.